The sequence spans 633 residues: Polypeptide N-acetylgalactosaminyltransferase 3 (633 aa).

The Cytoplasmic portion of the chain corresponds to 1-19 (MAHLKRLVKLHIKRHYHKK). A helical; Signal-anchor for type II membrane protein membrane pass occupies residues 20-37 (FWKLGAVIFFFIIVLVLM). The Lumenal portion of the chain corresponds to 38-633 (QREVSVQYSK…LQKWILSQND (596 aa)). A glycan (N-linked (GlcNAc...) asparagine) is linked at asparagine 132. Positions 184–293 (LPTTSVIIVF…YGWLEPLLAR (110 aa)) are catalytic subdomain A. Residues aspartate 277 and histidine 279 each coordinate Mn(2+). N-linked (GlcNAc...) asparagine glycosylation occurs at asparagine 297. The segment at 356 to 418 (PIKTPTFAGG…PCSVVGHVFR (63 aa)) is catalytic subdomain B. Position 415 (histidine 415) interacts with Mn(2+). A glycan (N-linked (GlcNAc...) asparagine) is linked at asparagine 484. The Ricin B-type lectin domain occupies 504–630 (VISGYIKSVG…SDPLQKWILS (127 aa)). Cysteine 517 and cysteine 535 are oxidised to a cystine. UDP-N-acetyl-alpha-D-galactosamine is bound by residues aspartate 519, glutamate 522, histidine 536, and asparagine 541. 2 disulfide bridges follow: cysteine 561/cysteine 574 and cysteine 605/cysteine 618.

This sequence belongs to the glycosyltransferase 2 family. GalNAc-T subfamily. Mn(2+) is required as a cofactor. Expressed in organs that contain secretory epithelial glands. Highly expressed in pancreas, skin, kidney and testis. Weakly expressed in prostate, ovary, intestine and colon. Also expressed in placenta and lung and fetal lung and fetal kidney.

The protein localises to the golgi apparatus. It is found in the golgi stack membrane. It carries out the reaction L-seryl-[protein] + UDP-N-acetyl-alpha-D-galactosamine = a 3-O-[N-acetyl-alpha-D-galactosaminyl]-L-seryl-[protein] + UDP + H(+). The enzyme catalyses L-threonyl-[protein] + UDP-N-acetyl-alpha-D-galactosamine = a 3-O-[N-acetyl-alpha-D-galactosaminyl]-L-threonyl-[protein] + UDP + H(+). It participates in protein modification; protein glycosylation. Functionally, catalyzes the initial reaction in O-linked oligosaccharide biosynthesis, the transfer of an N-acetyl-D-galactosamine residue to a serine or threonine residue on the protein receptor. Has activity toward HIV envelope glycoprotein gp120, EA2, MUC2, MUC1A and MUC5AC. Probably glycosylates fibronectin in vivo. Glycosylates FGF23. This is Polypeptide N-acetylgalactosaminyltransferase 3 (GALNT3) from Homo sapiens (Human).